Here is a 107-residue protein sequence, read N- to C-terminus: MESKFAHIIVFFLLATSFETLLARKESDGPEVIELQKEFECNGKQRWPELIGVPTKLAKGIIEKENSLITNVQILLNGSPVTMDYRCNRVRLFDNILGDVVQIPRVA.

The N-terminal stretch at 1–23 (MESKFAHIIVFFLLATSFETLLA) is a signal peptide. Positions 24-36 (RKESDGPEVIELQ) are excised as a propeptide.

It belongs to the protease inhibitor I13 (potato type I serine protease inhibitor) family. Heterogeneous tetramers of similar chains.

Inhibits both chymotrypsin and trypsin. The chain is Wound-induced proteinase inhibitor 1 from Solanum tuberosum (Potato).